Here is a 424-residue protein sequence, read N- to C-terminus: Endoglucanase (424 aa).

A signal peptide spans 1-19 (MHRCMPLVAASMAALMLAG). A lipid anchor (N-palmitoyl cysteine) is attached at Cys-20. The S-diacylglycerol cysteine moiety is linked to residue Cys-20. The propeptide occupies 20–43 (CGGGDGDTTLSTAAATDTTTLKTA). Catalysis depends on Glu-247, which acts as the Proton donor. The active-site Nucleophile is the Glu-359.

This sequence belongs to the glycosyl hydrolase 5 (cellulase A) family.

Its subcellular location is the cell membrane. It catalyses the reaction Endohydrolysis of (1-&gt;4)-beta-D-glucosidic linkages in cellulose, lichenin and cereal beta-D-glucans.. This Ralstonia nicotianae (strain ATCC BAA-1114 / GMI1000) (Ralstonia solanacearum) protein is Endoglucanase (egl).